The sequence spans 158 residues: Ribonuclease H (158 aa).

The RNase H type-1 domain maps to glycine 3 to glutamate 144. 4 residues coordinate Mg(2+): aspartate 12, glutamate 50, aspartate 72, and aspartate 136.

The protein belongs to the RNase H family. As to quaternary structure, monomer. Mg(2+) is required as a cofactor.

It localises to the cytoplasm. It carries out the reaction Endonucleolytic cleavage to 5'-phosphomonoester.. Functionally, endonuclease that specifically degrades the RNA of RNA-DNA hybrids. The protein is Ribonuclease H of Shewanella loihica (strain ATCC BAA-1088 / PV-4).